Reading from the N-terminus, the 207-residue chain is Large ribosomal subunit protein uL4 (207 aa).

This sequence belongs to the universal ribosomal protein uL4 family. As to quaternary structure, part of the 50S ribosomal subunit.

In terms of biological role, one of the primary rRNA binding proteins, this protein initially binds near the 5'-end of the 23S rRNA. It is important during the early stages of 50S assembly. It makes multiple contacts with different domains of the 23S rRNA in the assembled 50S subunit and ribosome. Functionally, forms part of the polypeptide exit tunnel. The sequence is that of Large ribosomal subunit protein uL4 from Geobacter metallireducens (strain ATCC 53774 / DSM 7210 / GS-15).